A 180-amino-acid polypeptide reads, in one-letter code: Peptide deformylase (180 aa).

Fe cation-binding residues include Cys96 and His138. Glu139 is an active-site residue. Residue His142 coordinates Fe cation.

The protein belongs to the polypeptide deformylase family. Fe(2+) is required as a cofactor.

It carries out the reaction N-terminal N-formyl-L-methionyl-[peptide] + H2O = N-terminal L-methionyl-[peptide] + formate. Removes the formyl group from the N-terminal Met of newly synthesized proteins. Requires at least a dipeptide for an efficient rate of reaction. N-terminal L-methionine is a prerequisite for activity but the enzyme has broad specificity at other positions. This Rhodopseudomonas palustris (strain BisA53) protein is Peptide deformylase.